Here is a 367-residue protein sequence, read N- to C-terminus: Folliculin-like protein bhd1 (367 aa).

Disordered stretches follow at residues 41–75 (RSIGVTENGNDSPEAFKNELDNRNNADSQSLQSST) and 92–115 (SKGPESPRVNSFHNSYSRNQSPIS). Residues 54–64 (EAFKNELDNRN) are compositionally biased toward basic and acidic residues. 2 stretches are compositionally biased toward polar residues: residues 65 to 75 (NADSQSLQSST) and 99 to 115 (RVNSFHNSYSRNQSPIS). Residues 131-302 (FSVPDVQPRL…SNIGTAPSYE (172 aa)) enclose the uDENN FLCN/SMCR8-type domain.

It belongs to the folliculin family.

The protein resides in the nucleus. It localises to the cytoplasm. The polypeptide is Folliculin-like protein bhd1 (bhd1) (Schizosaccharomyces pombe (strain 972 / ATCC 24843) (Fission yeast)).